The chain runs to 440 residues: UDP-N-acetylmuramoylalanine--D-glutamate ligase (440 aa).

115–121 contacts ATP; the sequence is GSNGKST.

The protein belongs to the MurCDEF family.

The protein localises to the cytoplasm. The enzyme catalyses UDP-N-acetyl-alpha-D-muramoyl-L-alanine + D-glutamate + ATP = UDP-N-acetyl-alpha-D-muramoyl-L-alanyl-D-glutamate + ADP + phosphate + H(+). Its pathway is cell wall biogenesis; peptidoglycan biosynthesis. Its function is as follows. Cell wall formation. Catalyzes the addition of glutamate to the nucleotide precursor UDP-N-acetylmuramoyl-L-alanine (UMA). This chain is UDP-N-acetylmuramoylalanine--D-glutamate ligase, found in Aliivibrio fischeri (strain MJ11) (Vibrio fischeri).